Here is a 347-residue protein sequence, read N- to C-terminus: Protein RecA (347 aa).

67–74 (GPESSGKT) serves as a coordination point for ATP.

It belongs to the RecA family.

The protein resides in the cytoplasm. Can catalyze the hydrolysis of ATP in the presence of single-stranded DNA, the ATP-dependent uptake of single-stranded DNA by duplex DNA, and the ATP-dependent hybridization of homologous single-stranded DNAs. It interacts with LexA causing its activation and leading to its autocatalytic cleavage. This is Protein RecA from Helicobacter acinonychis (strain Sheeba).